A 338-amino-acid chain; its full sequence is UPF0252 protein PF1496 (338 aa).

A helical transmembrane segment spans residues 100 to 120 (ILSMLFLVFILFPAFTSHIWS).

It belongs to the UPF0252 family.

The protein resides in the membrane. This Pyrococcus furiosus (strain ATCC 43587 / DSM 3638 / JCM 8422 / Vc1) protein is UPF0252 protein PF1496.